The sequence spans 137 residues: Nucleoside diphosphate kinase (137 aa).

ATP is bound by residues Lys10, Phe58, Arg86, Thr92, Arg103, and Asn113. The active-site Pros-phosphohistidine intermediate is His116.

It belongs to the NDK family. Homotetramer. The cofactor is Mg(2+).

The protein resides in the cytoplasm. The enzyme catalyses a 2'-deoxyribonucleoside 5'-diphosphate + ATP = a 2'-deoxyribonucleoside 5'-triphosphate + ADP. The catalysed reaction is a ribonucleoside 5'-diphosphate + ATP = a ribonucleoside 5'-triphosphate + ADP. Major role in the synthesis of nucleoside triphosphates other than ATP. The ATP gamma phosphate is transferred to the NDP beta phosphate via a ping-pong mechanism, using a phosphorylated active-site intermediate. The protein is Nucleoside diphosphate kinase of Helicobacter pylori (strain Shi470).